The following is a 439-amino-acid chain: Secreted aspartic protease LUC8 (439 aa).

Positions 1 to 20 are cleaved as a signal peptide; sequence MMHAFHHLAVLLIGSLPASA. Residues asparagine 33 and asparagine 54 are each glycosylated (N-linked (GlcNAc...) asparagine). Residues 51-435 form the Peptidase A1 domain; that stretch reads YLFNITVGTP…DFETQSFGLA (385 aa). Residue aspartate 69 is part of the active site. N-linked (GlcNAc...) asparagine glycosylation is found at asparagine 110, asparagine 126, asparagine 179, and asparagine 289. The active site involves aspartate 300. Residues asparagine 329 and asparagine 373 are each glycosylated (N-linked (GlcNAc...) asparagine). A disulfide bond links cysteine 355 and cysteine 391.

The protein belongs to the peptidase A1 family.

Its subcellular location is the secreted. Functionally, secreted aspartic protease; part of the gene cluster that mediates the biosynthesis of the mycotoxin lucilactaene and the lucilactaene-related compound NG-391 that act as cell cycle inhibitors with potent growth inhibitory activity against malarial parasites, moderate growth inhibitory activity against cancer cells, and no activity against bacteria and fungi. Within the cluster, LUC7 and LUC8 encode proteins which are not commonly involved in the biosynthesis of secondary metabolites and are not essential for lucilactaene biosynthesis. The chain is Secreted aspartic protease LUC8 from Fusarium sp.